We begin with the raw amino-acid sequence, 223 residues long: MTQDQLKQAVAQAAVDFILPKLDDKSIVGVGTGSTANCFIDALAKHKGAFDGAVASSEATAARLKGHGIPVYELNTVSDLEFYVDGADESDEHLNLIKGGGAALTREKIVAAVAKTFICIADGSKLVPVLGAFPLPVEVVPMARSHVARQLVKLGGDPVYREGVLTDNGNIIIDVHNMSITNPVELEASINAIVGVVTNGLFAARPADLLLLGTAEGVKTLTR.

Substrate-binding positions include 32-35 (TGST), 85-88 (DGAD), and 98-101 (KGGG). Glutamate 107 functions as the Proton acceptor in the catalytic mechanism. Residue lysine 125 coordinates substrate.

It belongs to the ribose 5-phosphate isomerase family. Homodimer.

The catalysed reaction is aldehydo-D-ribose 5-phosphate = D-ribulose 5-phosphate. The protein operates within carbohydrate degradation; pentose phosphate pathway; D-ribose 5-phosphate from D-ribulose 5-phosphate (non-oxidative stage): step 1/1. Functionally, catalyzes the reversible conversion of ribose-5-phosphate to ribulose 5-phosphate. This chain is Ribose-5-phosphate isomerase A, found in Pseudomonas syringae pv. tomato (strain ATCC BAA-871 / DC3000).